A 244-amino-acid chain; its full sequence is Demethylmenaquinone methyltransferase (244 aa).

Residues T65, D86, and 114-115 each bind S-adenosyl-L-methionine; that span reads DA.

Belongs to the class I-like SAM-binding methyltransferase superfamily. MenG/UbiE family.

It catalyses the reaction a 2-demethylmenaquinol + S-adenosyl-L-methionine = a menaquinol + S-adenosyl-L-homocysteine + H(+). It functions in the pathway quinol/quinone metabolism; menaquinone biosynthesis; menaquinol from 1,4-dihydroxy-2-naphthoate: step 2/2. In terms of biological role, methyltransferase required for the conversion of demethylmenaquinol (DMKH2) to menaquinol (MKH2). The chain is Demethylmenaquinone methyltransferase from Lactobacillus johnsonii (strain CNCM I-12250 / La1 / NCC 533).